Consider the following 503-residue polypeptide: Cobyric acid synthase (503 aa).

Positions 251 to 450 constitute a GATase cobBQ-type domain; it reads DLDIAVIRLP…IHGIFENAAF (200 aa). The active-site Nucleophile is the cysteine 331. Histidine 442 is an active-site residue.

Belongs to the CobB/CobQ family. CobQ subfamily.

It functions in the pathway cofactor biosynthesis; adenosylcobalamin biosynthesis. Catalyzes amidations at positions B, D, E, and G on adenosylcobyrinic A,C-diamide. NH(2) groups are provided by glutamine, and one molecule of ATP is hydrogenolyzed for each amidation. The polypeptide is Cobyric acid synthase (Dehalococcoides mccartyi (strain ATCC BAA-2100 / JCM 16839 / KCTC 5957 / BAV1)).